Consider the following 162-residue polypeptide: Ubiquitin-fold modifier-conjugating enzyme 1 (162 aa).

Cys115 functions as the Glycyl thioester intermediate in the catalytic mechanism.

The protein belongs to the ubiquitin-conjugating enzyme family. UFC1 subfamily. In terms of assembly, interacts with uba-5. Expressed in the intestine.

In terms of biological role, E2-like enzyme which forms an intermediate with ufm-1. The intermediate is formed via a thioester linkage. The sequence is that of Ubiquitin-fold modifier-conjugating enzyme 1 from Caenorhabditis elegans.